Consider the following 512-residue polypeptide: Maturase K (512 aa).

The protein belongs to the intron maturase 2 family. MatK subfamily.

It localises to the plastid. Its subcellular location is the chloroplast. Its function is as follows. Usually encoded in the trnK tRNA gene intron. Probably assists in splicing its own and other chloroplast group II introns. The chain is Maturase K from Zantedeschia aethiopica (White calla lily).